Here is a 356-residue protein sequence, read N- to C-terminus: Holliday junction branch migration complex subunit RuvB (356 aa).

The large ATPase domain (RuvB-L) stretch occupies residues serine 13 to tyrosine 201. Positions asparagine 15 to arginine 35 are disordered. ATP contacts are provided by residues leucine 40, arginine 41, glycine 82, lysine 85, threonine 86, threonine 87, glutamate 148–phenylalanine 150, arginine 191, tyrosine 201, and arginine 238. Threonine 86 contributes to the Mg(2+) binding site. A small ATPAse domain (RuvB-S) region spans residues serine 202 to glutamine 273. Residues glutamate 276–lysine 356 are head domain (RuvB-H). DNA-binding residues include arginine 331 and arginine 336.

It belongs to the RuvB family. In terms of assembly, homohexamer. Forms an RuvA(8)-RuvB(12)-Holliday junction (HJ) complex. HJ DNA is sandwiched between 2 RuvA tetramers; dsDNA enters through RuvA and exits via RuvB. An RuvB hexamer assembles on each DNA strand where it exits the tetramer. Each RuvB hexamer is contacted by two RuvA subunits (via domain III) on 2 adjacent RuvB subunits; this complex drives branch migration. In the full resolvosome a probable DNA-RuvA(4)-RuvB(12)-RuvC(2) complex forms which resolves the HJ.

Its subcellular location is the cytoplasm. It carries out the reaction ATP + H2O = ADP + phosphate + H(+). Its function is as follows. The RuvA-RuvB-RuvC complex processes Holliday junction (HJ) DNA during genetic recombination and DNA repair, while the RuvA-RuvB complex plays an important role in the rescue of blocked DNA replication forks via replication fork reversal (RFR). RuvA specifically binds to HJ cruciform DNA, conferring on it an open structure. The RuvB hexamer acts as an ATP-dependent pump, pulling dsDNA into and through the RuvAB complex. RuvB forms 2 homohexamers on either side of HJ DNA bound by 1 or 2 RuvA tetramers; 4 subunits per hexamer contact DNA at a time. Coordinated motions by a converter formed by DNA-disengaged RuvB subunits stimulates ATP hydrolysis and nucleotide exchange. Immobilization of the converter enables RuvB to convert the ATP-contained energy into a lever motion, pulling 2 nucleotides of DNA out of the RuvA tetramer per ATP hydrolyzed, thus driving DNA branch migration. The RuvB motors rotate together with the DNA substrate, which together with the progressing nucleotide cycle form the mechanistic basis for DNA recombination by continuous HJ branch migration. Branch migration allows RuvC to scan DNA until it finds its consensus sequence, where it cleaves and resolves cruciform DNA. The sequence is that of Holliday junction branch migration complex subunit RuvB from Prochlorococcus marinus (strain SARG / CCMP1375 / SS120).